The sequence spans 258 residues: UDP-N-acetylenolpyruvoylglucosamine reductase (258 aa).

The active site involves Arg142. Ser184 (proton donor) is an active-site residue. Glu254 is an active-site residue.

Belongs to the MurB family. FAD is required as a cofactor.

It is found in the cytoplasm. It carries out the reaction UDP-N-acetyl-alpha-D-muramate + NADP(+) = UDP-N-acetyl-3-O-(1-carboxyvinyl)-alpha-D-glucosamine + NADPH + H(+). It functions in the pathway cell wall biogenesis; peptidoglycan biosynthesis. Cell wall formation. The sequence is that of UDP-N-acetylenolpyruvoylglucosamine reductase from Campylobacter jejuni subsp. jejuni serotype O:2 (strain ATCC 700819 / NCTC 11168).